Here is a 502-residue protein sequence, read N- to C-terminus: Arginine-specific demethylase JMJ22 (502 aa).

The tract at residues 15 to 45 is disordered; it reads KSKSKRLKLHQHEPESLFPEKEVEEEDEDEG. Positions 24 to 35 are enriched in basic and acidic residues; sequence HQHEPESLFPEK. Residues 80-126 enclose the F-box domain; the sequence is LGNLQILSDELVLDILGLLGANHLGVLATVTKSFYIFANHEPLWRNL. The JmjC domain maps to 279–439; it reads EKVPVLDSEY…NVLEFLKKPN (161 aa). Fe cation contacts are provided by His-324, Asp-326, and His-407.

It belongs to the JARID1 histone demethylase family. It depends on Fe(2+) as a cofactor. Expressed in inflorescences, roots and siliques, and, at low levels, in leaves and stems.

The protein resides in the nucleus. It carries out the reaction N(omega),N(omega)-dimethyl-L-arginyl-[protein] + 2-oxoglutarate + O2 = N(omega)-methyl-L-arginyl-[protein] + formaldehyde + succinate + CO2. Functionally, histone demethylase that demethylates 'Arg-3' (H4R3me) of histone H4 with a specific activity for H4R3me2. Involved in the positive regulation of gene expression. Together with JMJ20, positively regulates seed germination by promoting the removal of repressive histone arginine methylations (e.g. H4R3me2) at GA3ox1 and GA3ox2 to trigger gibberellic acid (GA) biosynthesis. This chain is Arginine-specific demethylase JMJ22, found in Arabidopsis thaliana (Mouse-ear cress).